We begin with the raw amino-acid sequence, 508 residues long: UDP-N-acetylmuramoyl-L-alanyl-D-glutamate--2,6-diaminopimelate ligase (508 aa).

Ser33 provides a ligand contact to UDP-N-acetyl-alpha-D-muramoyl-L-alanyl-D-glutamate. Residue 121–127 (GTNGKST) coordinates ATP. Residues Asn162, 163–164 (TT), Ser190, Gln196, and Arg198 contribute to the UDP-N-acetyl-alpha-D-muramoyl-L-alanyl-D-glutamate site. Lys230 carries the post-translational modification N6-carboxylysine. Meso-2,6-diaminopimelate is bound by residues Arg399, 423–426 (DNPR), Gly474, and Glu478. Positions 423 to 426 (DNPR) match the Meso-diaminopimelate recognition motif motif.

The protein belongs to the MurCDEF family. MurE subfamily. It depends on Mg(2+) as a cofactor. Carboxylation is probably crucial for Mg(2+) binding and, consequently, for the gamma-phosphate positioning of ATP.

The protein resides in the cytoplasm. The catalysed reaction is UDP-N-acetyl-alpha-D-muramoyl-L-alanyl-D-glutamate + meso-2,6-diaminopimelate + ATP = UDP-N-acetyl-alpha-D-muramoyl-L-alanyl-gamma-D-glutamyl-meso-2,6-diaminopimelate + ADP + phosphate + H(+). Its pathway is cell wall biogenesis; peptidoglycan biosynthesis. In terms of biological role, catalyzes the addition of meso-diaminopimelic acid to the nucleotide precursor UDP-N-acetylmuramoyl-L-alanyl-D-glutamate (UMAG) in the biosynthesis of bacterial cell-wall peptidoglycan. The sequence is that of UDP-N-acetylmuramoyl-L-alanyl-D-glutamate--2,6-diaminopimelate ligase from Buchnera aphidicola subsp. Baizongia pistaciae (strain Bp).